We begin with the raw amino-acid sequence, 95 residues long: Aspartyl/glutamyl-tRNA(Asn/Gln) amidotransferase subunit C (95 aa).

It belongs to the GatC family. Heterotrimer of A, B and C subunits.

The enzyme catalyses L-glutamyl-tRNA(Gln) + L-glutamine + ATP + H2O = L-glutaminyl-tRNA(Gln) + L-glutamate + ADP + phosphate + H(+). It catalyses the reaction L-aspartyl-tRNA(Asn) + L-glutamine + ATP + H2O = L-asparaginyl-tRNA(Asn) + L-glutamate + ADP + phosphate + 2 H(+). Its function is as follows. Allows the formation of correctly charged Asn-tRNA(Asn) or Gln-tRNA(Gln) through the transamidation of misacylated Asp-tRNA(Asn) or Glu-tRNA(Gln) in organisms which lack either or both of asparaginyl-tRNA or glutaminyl-tRNA synthetases. The reaction takes place in the presence of glutamine and ATP through an activated phospho-Asp-tRNA(Asn) or phospho-Glu-tRNA(Gln). In Beijerinckia indica subsp. indica (strain ATCC 9039 / DSM 1715 / NCIMB 8712), this protein is Aspartyl/glutamyl-tRNA(Asn/Gln) amidotransferase subunit C.